A 777-amino-acid chain; its full sequence is MSAQTSPAEKGLNPGLMCQESYACSGTDEAIFECDECCSLQCLRCEEELHRQERLRNHERIRLKPGHVPYCDLCKGLSGHLPGVRQRAIVRCQTCKINLCLECQKRTHSGGNKRRHPVTVYNVSNLQESLEAEEMDEETKRKKMTEKVVSFLLVDENEEIQVTNEEDFIRKLDCKPDQHLKVVSIFGNTGDGKSHTLNHTFFYGREVFKTSPTQESCTVGVWAAYDPVHKVAVIDTEGLLGATVNLSQRTRLLLKVLAISDLVIYRTHADRLHNDLFKFLGDASEAYLKHFTKELKATTARCGLDVPLSTLGPAVIIFHETVHTQLLGSDHPSEVPEKLIQDRFRKLGRFPEAFSSIHYKGTRTYNPPTDFSGLRRALEQLLENNTTRSPRHPGVIFKALKALSDRFSGEIPDDQMAHSSFFPDEYFTCSSLCLSCGVGCKKSMNHGKEGVPHEAKSRCRYSHQYDNRVYTCKACYERGEEVSVVPKTSASTDSPWMGLAKYAWSGYVIECPNCGVVYRSRQYWFGNQDPVDTVVRTEIVHVWPGTDGFLKDNNNAAQRLLDGMNFMAQSVSELSLGPTKAVTSWLTDQIAPAYWRPNSQILSCNKCATSFKDNDTKHHCRACGEGFCDSCSSKTRPVPERGWGPAPVRVCDNCYEARNVQLAVTEAQVDDEGGTLIARKVGEAVQNTLGAVVTAIDIPLGLVKDAARPAYWVPDHEILHCHNCRKEFSIKLSKHHCRACGQGFCDECSHDRRAVPSRGWDHPVRVCFNCNKKPGDL.

Positions 416 to 777 (MAHSSFFPDE…FNCNKKPGDL (362 aa)) are required for localization in the lipid droplets. 2 consecutive FYVE-type zinc fingers follow at residues 598–659 (NSQI…EARN) and 715–775 (DHEI…KKPG). 16 residues coordinate Zn(2+): Cys604, Cys607, Cys620, Cys623, Cys628, Cys631, Cys651, Cys654, Cys721, Cys724, Cys737, Cys740, Cys745, Cys748, Cys767, and Cys770.

Interacts with RAB18 (in GTP-bound form). Interacts with BSCL2 in a RAB18-dependent manner. Interacts with ZW10. In terms of assembly, (Microbial infection) Interacts with SARS coronavirus-2/SARS-CoV-2 non-structural protein 6 (nsp6); the interaction is independent of PtdIns3P-binding and leads to endoplasmic reticulum (ER) and double membrane vesicles (DMVs) binding to lipid droplets. As to expression, highly expressed in heart. Also detected in the testis. Expressed in all tissues examined, including, brain, placenta, lung, liver, skeletal muscle, pancreas and kidney. Highly expressed in heart.

The protein localises to the golgi apparatus. The protein resides in the golgi stack. Its subcellular location is the endoplasmic reticulum. It is found in the lipid droplet. It localises to the preautophagosomal structure. The protein localises to the mitochondrion. Functionally, plays a role in the formation of lipid droplets (LDs) which are storage organelles at the center of lipid and energy homeostasis. Regulates the morphology, size and distribution of LDs. Mediates the formation of endoplasmic reticulum-lipid droplets (ER-LD) contacts by forming a complex with RAB18 and ZW10. Binds to phosphatidylinositol 3-phosphate (PtdIns3P) through FYVE-type zinc finger. In terms of biological role, (Microbial infection) Upon SARS coronavirus-2/SARS-CoV-2 infection, mediates through binding with non-structural protein 6 (nsp6) the replication organelle-lipid droplet association required to sustain viral replication. The polypeptide is Zinc finger FYVE domain-containing protein 1 (ZFYVE1) (Homo sapiens (Human)).